The chain runs to 93 residues: YcgL domain-containing protein VIBHAR_01387 (93 aa).

Residues 1–84 (MLCSIYKSSR…PPENLLEKYK (84 aa)) form the YcgL domain.

This Vibrio campbellii (strain ATCC BAA-1116) protein is YcgL domain-containing protein VIBHAR_01387.